Consider the following 240-residue polypeptide: Ribonuclease T2 (240 aa).

The first 19 residues, 1 to 19 (MRFIAFAVIFSAVYLCSSA), serve as a signal peptide directing secretion. An intrachain disulfide couples Cys41 to Cys46. His56 is an active-site residue. 3 cysteine pairs are disulfide-bonded: Cys66/Cys110, Cys173/Cys227, and Cys191/Cys201. N-linked (GlcNAc...) asparagine glycans are attached at residues Asn67 and Asn73. Active-site residues include Glu103 and His107.

It belongs to the RNase T2 family. As to expression, ubiquitous.

It localises to the lysosome lumen. The protein localises to the endoplasmic reticulum lumen. Its subcellular location is the secreted. The catalysed reaction is a ribonucleotidyl-ribonucleotide-RNA + H2O = a 3'-end 3'-phospho-ribonucleotide-RNA + a 5'-end dephospho-ribonucleoside-RNA + H(+). Its function is as follows. Has ribonuclease activity, with higher activity at acidic pH. Probably is involved in lysosomal degradation of ribosomal RNA. This chain is Ribonuclease T2 (rnaset2), found in Danio rerio (Zebrafish).